We begin with the raw amino-acid sequence, 266 residues long: MDFVAKNLTKLRETNPLVQNITNYVVMNSTANSLLALGASPVMAHAMDELEEMVSIASSLVVNIGTLDEYWIPSMEKAAKIATDLKKPIILDPVGAGATKLRTKTALKILDFADISVLRGNFGEIAAVLGEHGKTRGVDSVAYDSNEAIELSKNAAKEFNTVSAVTGPIDYVSNGKELYAISNGHPMLSKVTGTGCASTSIIGAFSAVDEPLKAAVSGLTVYGISAEMAFAEAPYPGTFQAKVYDWLYRIDEKLVLEKAKVNKFEI.

M43 contacts substrate. ATP contacts are provided by R119 and T166. Residue G193 coordinates substrate.

Belongs to the Thz kinase family. Mg(2+) serves as cofactor.

It carries out the reaction 5-(2-hydroxyethyl)-4-methylthiazole + ATP = 4-methyl-5-(2-phosphooxyethyl)-thiazole + ADP + H(+). It participates in cofactor biosynthesis; thiamine diphosphate biosynthesis; 4-methyl-5-(2-phosphoethyl)-thiazole from 5-(2-hydroxyethyl)-4-methylthiazole: step 1/1. Its function is as follows. Catalyzes the phosphorylation of the hydroxyl group of 4-methyl-5-beta-hydroxyethylthiazole (THZ). The chain is Hydroxyethylthiazole kinase from Methanococcus maripaludis (strain C7 / ATCC BAA-1331).